A 350-amino-acid polypeptide reads, in one-letter code: Protein YIPF3 (350 aa).

Residues 1-10 (MATTAAPAGG) are compositionally biased toward low complexity. A disordered region spans residues 1–51 (MATTAAPAGGARNGAGPEWGGFEENIQGGGSAVIDMENMDDTSGSSFEDMG). Ala-2 carries the N-acetylalanine modification. At 2–148 (ATTAAPAGGA…PIKMVNFPQK (147 aa)) the chain is on the cytoplasmic side. The chain crosses the membrane as a helical span at residues 149 to 169 (IAGELYGPLMLVFTLVAILLH). Topologically, residues 170–187 (GMKTSDTIIREGTLMGTA) are lumenal. A helical transmembrane segment spans residues 188-208 (IGTCFGYWLGVSSFIYFLAYL). The Cytoplasmic portion of the chain corresponds to 209–214 (CNAQIT). The chain crosses the membrane as a helical span at residues 215–237 (MLQMLALLGYGLFGHCIVLFITY). Topologically, residues 238 to 240 (NIH) are lumenal. Residues 241–263 (LHALFYLFWLLVGGLSTLRMVAV) traverse the membrane as a helical segment. Residues 264 to 274 (LVSRTVGPTQR) lie on the Cytoplasmic side of the membrane. A helical transmembrane segment spans residues 275–295 (LLLCGTLAALHMLFLLYLHFA). Over 296 to 350 (YHKVVEGILDTLEGPNIPPIQRVPRDIPAMLPAARLPTTVLNATAKAVAVTLQSH) the chain is Lumenal. Residues Thr-333 and Thr-334 are each glycosylated (O-linked (GalNAc...) threonine). An N-linked (GlcNAc...) asparagine glycan is attached at Asn-337. O-linked (GalNAc...) threonine glycans are attached at residues Thr-339 and Thr-346.

Belongs to the YIP1 family. As to quaternary structure, interacts with YIPF4 and YIPF5. Post-translationally, N-glycosylated in the ER (40 kDa form I), then O-glycosylated in the Golgi apparatus (46 kDa form II), the C-terminal lumenal region is later removed in the Golgi apparatus to produce a 36 kDa form III. O-glycosylated with core 1-like and core 2-like glycans. O-glycan heterogeneity at Thr-346: HexNAc (minor), HexHexNAc (major), Hex1HexNAc2 (minor), Hex2HexNAc2 (minor) and dHex1Hex2HexNAc2 (minor). In terms of tissue distribution, expressed by nucleated hematopoietic cells (at protein level).

Its subcellular location is the cell membrane. The protein localises to the cytoplasm. It is found in the golgi apparatus. The protein resides in the cis-Golgi network membrane. In terms of biological role, involved in the maintenance of the Golgi structure. May play a role in hematopoiesis. This chain is Protein YIPF3 (YIPF3), found in Homo sapiens (Human).